The sequence spans 27 residues: Secretin (27 aa).

Position 27 is a methionine amide (Met27).

This sequence belongs to the glucagon family.

It localises to the secreted. Hormone involved in different processes, such as regulation of the pH of the duodenal content, food intake and water homeostasis. Exerts its biological effects by binding to secretin receptor (SCTR), a G-protein coupled receptor expressed in the basolateral domain of several cells. The chain is Secretin from Gallus gallus (Chicken).